A 288-amino-acid polypeptide reads, in one-letter code: MKIDIVSVFPEYFEVMNLSLMGKAQAKGLLEIKAHNLRDWTHDVHHSVDDTPVGGGAGMVMKPEVWSECLDELLGFSQPSAATDAVDTSDPGDSAAPDSSAPSGAPVLIFPNPSAPLFTQRDATELSHADHLLFGCGRYEGYDARIPDYYRAQGVDVREYSIGDYVLNGGEVAVSVMLEAITRLMPGFMGNPDSIVEESYTGEGALLEHRQYTKPAVWRGIAVPDVLLSGDHGKVDRFRRDEALARTAEIRPDLIAALDCKALDKADRKTLMALGWEVSAAHPRRLAD.

The interval 82–105 (ATDAVDTSDPGDSAAPDSSAPSGA) is disordered. The span at 89 to 105 (SDPGDSAAPDSSAPSGA) shows a compositional bias: low complexity. S-adenosyl-L-methionine contacts are provided by residues Gly137 and 162–167 (IGDYVL).

This sequence belongs to the RNA methyltransferase TrmD family. As to quaternary structure, homodimer.

Its subcellular location is the cytoplasm. It catalyses the reaction guanosine(37) in tRNA + S-adenosyl-L-methionine = N(1)-methylguanosine(37) in tRNA + S-adenosyl-L-homocysteine + H(+). Specifically methylates guanosine-37 in various tRNAs. This Bifidobacterium longum (strain DJO10A) protein is tRNA (guanine-N(1)-)-methyltransferase.